Here is a 243-residue protein sequence, read N- to C-terminus: Transcription factor TFIIS homolog (243 aa).

A TFIIS central domain is found at 77–201 (MRDIIQMMFF…SQQKVAEKTS (125 aa)). The TFIIS-type zinc finger occupies 202–242 (QLYKCPNCKQRMCTYREVQTRALDEPSTIYCTCKKCGHEFI). Cys-206, Cys-209, Cys-234, and Cys-237 together coordinate Zn(2+).

Belongs to the TFS-II family.

Functionally, putative initiation factor. Necessary for efficient transcription elongation past template-encoded arresting sites. The sequence is that of Transcription factor TFIIS homolog from African swine fever virus (isolate Pig/Kenya/KEN-50/1950) (ASFV).